Here is a 135-residue protein sequence, read N- to C-terminus: Putative pre-16S rRNA nuclease (135 aa).

It belongs to the YqgF nuclease family.

The protein localises to the cytoplasm. Its function is as follows. Could be a nuclease involved in processing of the 5'-end of pre-16S rRNA. The polypeptide is Putative pre-16S rRNA nuclease (Christiangramia forsetii (strain DSM 17595 / CGMCC 1.15422 / KT0803) (Gramella forsetii)).